We begin with the raw amino-acid sequence, 296 residues long: Transcription factor Pur-alpha 1 (296 aa).

Position 1 is an N-acetylmethionine (Met1). 2 disordered regions span residues 1–25 (MEANSGGGGGAEGGRAVTGGGGGGG) and 186–214 (IPGHGSQQPSSSEHNVDRTIDSPGQEETG). Ser207 is subject to Phosphoserine.

It belongs to the PUR DNA-binding protein family. As to quaternary structure, homodimer. Interacts with TCP20.

It is found in the nucleus. Its function is as follows. Transcription factor that specifically binds the purine-rich double-stranded telomeric repeated sequence 5'-AAACCCTAA-3' found in promoter telo boxes. This Arabidopsis thaliana (Mouse-ear cress) protein is Transcription factor Pur-alpha 1 (PURA1).